Consider the following 282-residue polypeptide: 1-deoxy-11-beta-hydroxypentalenate dehydrogenase (282 aa).

12-36 (GAASGIGLALSARFARAGAGVVMAD) provides a ligand contact to NAD(+). Ser-144 contacts substrate. The active-site Proton acceptor is the Tyr-157. Lys-161 serves as a coordination point for NAD(+). Positions 258–282 (PPPSPEEELWPVPKTTTATTATTKH) are disordered. Low complexity predominate over residues 267–282 (WPVPKTTTATTATTKH).

It belongs to the short-chain dehydrogenases/reductases (SDR) family.

It carries out the reaction 1-deoxy-11beta-hydroxypentalenate + NAD(+) = 1-deoxy-11-oxopentalenate + NADH + H(+). Its pathway is antibiotic biosynthesis; pentalenolactone biosynthesis. In terms of biological role, catalyzes the oxidation of 1-deoxy-11-beta-hydroxypentalenic acid to 1-deoxy-11-oxopentalenic acid in the biosynthesis of pentalenolactone antibiotic. This Streptomyces arenae protein is 1-deoxy-11-beta-hydroxypentalenate dehydrogenase (pntF).